Consider the following 663-residue polypeptide: Cyclic nucleotide-gated channel alpha-2 (663 aa).

The tract at residues 1–61 is disordered; it reads MTEKANGVKS…QLAEMDAPQQ (61 aa). The Cytoplasmic portion of the chain corresponds to 1 to 144; that stretch reads MTEKANGVKS…PAGDWYYRWL (144 aa). Residues 12 to 23 show a composition bias toward low complexity; sequence PANNHNHHAPPA. The helical transmembrane segment at 145 to 166 threads the bilayer; that stretch reads FLIALPVLYNWCLLVARACFSD. Over 167-176 the chain is Extracellular; the sequence is LQKGYYIVWL. Residues 177 to 197 form a helical membrane-spanning segment; it reads VLDYVSDVVYIADLFIRLRTG. Residues 198 to 222 lie on the Cytoplasmic side of the membrane; sequence FLEQGLLVKDTKKLRDNYIHTMQFK. The helical transmembrane segment at 223–241 threads the bilayer; that stretch reads LDVASIIPTDLIYFAVGIH. Over 242–246 the chain is Extracellular; the sequence is NPEVR. The helical transmembrane segment at 247–265 threads the bilayer; sequence FNRLLHFARMFEFFDRTET. At 266–272 the chain is on the cytoplasmic side; that stretch reads RTSYPNI. Residues 270-378 form an ion conduction pathway region; it reads PNIFRISNLI…GNVGSMISNM (109 aa). A helical membrane pass occupies residues 273-296; the sequence is FRISNLILYILIIIHWNACIYYAI. The Extracellular portion of the chain corresponds to 297–319; sequence SKSIGFGVDTWVYPNITDPEYGY. Transmembrane regions (helical) follow at residues 320 to 354 and 355 to 379; these read LSRE…LFVI and FDFL…SNMN. Positions 337-340 are selectivity filter; sequence TIGE. A C-linker region spans residues 380-456; that stretch reads ATRAEFQAKI…STLKKVRIFQ (77 aa). Residues 380–663 lie on the Cytoplasmic side of the membrane; the sequence is ATRAEFQAKI…NSPEPPAEKP (284 aa). The segment at 460-580 is cyclic nucleotide-binding domain; the sequence is AGLLVELVLK…EERGREILMK (121 aa). Positions 520, 523, 536, and 537 each coordinate 3',5'-cyclic GMP. Residues R536 and T537 each contribute to the 3',5'-cyclic AMP site. Positions 597-651 form a coiled coil; it reads VQEKLEQLETNMDTLYTRFARLLAEYTGAQQKLKQRITVLETKMKQNNEDDSLSD. The interval 640–663 is disordered; it reads MKQNNEDDSLSDGMNSPEPPAEKP.

Belongs to the cyclic nucleotide-gated cation channel (TC 1.A.1.5) family. CNGA2 subfamily. As to quaternary structure, the olfactory cyclic nucleotide-gated channel is an heterotetramer composed of CNGA2, CNGA4 and CNGB1b subunits with 2:1:1 stoichiometry. As to expression, olfactory neurons.

It localises to the cell projection. The protein resides in the cilium membrane. The enzyme catalyses Ca(2+)(in) = Ca(2+)(out). It carries out the reaction Na(+)(in) = Na(+)(out). It catalyses the reaction K(+)(in) = K(+)(out). The catalysed reaction is NH4(+)(in) = NH4(+)(out). The enzyme catalyses Rb(+)(in) = Rb(+)(out). It carries out the reaction Li(+)(in) = Li(+)(out). It catalyses the reaction Cs(+)(in) = Cs(+)(out). Pore-forming subunit of the olfactory cyclic nucleotide-gated channel. Operates in the cilia of olfactory sensory neurons where chemical stimulation of the odorant is converted to an electrical signal. Mediates odorant-induced cAMP-dependent Ca(2+) influx triggering neuron depolarization. The rise of intracellular Ca(2+) levels potentiates the olfactory response by activating Ca(2+)-dependent Cl(-) channels, but it also serves as a negative feedback signal to desensitize the channel for rapid adaptation to odorants. Conducts cAMP- and cGMP-gated ion currents, with permeability for monovalent and divalent cations. The polypeptide is Cyclic nucleotide-gated channel alpha-2 (Bos taurus (Bovine)).